A 213-amino-acid chain; its full sequence is Charged multivesicular body protein 2b (213 aa).

N-acetylalanine is present on Ala-2. Residues 25-55 (QRAIIRDRAALEKQEKQLELEIKKMAKIGNK) adopt a coiled-coil conformation. Residues 179–194 (AKAPSAARSLPSASTS) are compositionally biased toward low complexity. The disordered stretch occupies residues 179–199 (AKAPSAARSLPSASTSKATIS). Ser-199 is subject to Phosphoserine. The short motif at 201 to 211 (EEIERQLKALG) is the MIT-interacting motif element.

It belongs to the SNF7 family. In terms of assembly, probable core component of the endosomal sorting required for transport complex III (ESCRT-III). ESCRT-III components are thought to multimerize to form a flat lattice on the perimeter membrane of the endosome. Several assembly forms of ESCRT-III may exist that interact and act sequentially. Interacts with CHMP2A. Interacts with VPS4A. Interacts with VPS4B; the interaction is direct. In terms of tissue distribution, in brain, it is expressed in all neuronal populations with a relatively enhanced expression in the hippocampus, frontal and temporal lobes and in both granule and Purkinje cells of the cerebellum. Not expressed in astrocytes or oligodendrocytes.

The protein resides in the cytoplasm. It is found in the cytosol. The protein localises to the late endosome membrane. Probable core component of the endosomal sorting required for transport complex III (ESCRT-III) which is involved in multivesicular bodies (MVBs) formation and sorting of endosomal cargo proteins into MVBs. MVBs contain intraluminal vesicles (ILVs) that are generated by invagination and scission from the limiting membrane of the endosome and mostly are delivered to lysosomes enabling degradation of membrane proteins, such as stimulated growth factor receptors, lysosomal enzymes and lipids. The MVB pathway appears to require the sequential function of ESCRT-O, -I,-II and -III complexes. ESCRT-III proteins mostly dissociate from the invaginating membrane before the ILV is released. The ESCRT machinery also functions in topologically equivalent membrane fission events, such as the terminal stages of cytokinesis. ESCRT-III proteins are believed to mediate the necessary vesicle extrusion and/or membrane fission activities, possibly in conjunction with the AAA ATPase VPS4. The sequence is that of Charged multivesicular body protein 2b (Chmp2b) from Mus musculus (Mouse).